The sequence spans 126 residues: MTDLREKKRIAFFRGHSAERLAAFALMLKGFRIVARRYRTRLGEIDLIARRGDLVLIVEVKARASFEAAQFAVTPQAMRRIEAAADLWLQRQTDRARLSLRFDMVAVLPRRWPKHVPAFFTAGHYG.

The protein belongs to the UPF0102 family.

In Brucella canis (strain ATCC 23365 / NCTC 10854 / RM-666), this protein is UPF0102 protein BCAN_A0183.